Reading from the N-terminus, the 98-residue chain is Co-chaperonin GroES (98 aa).

A disordered region spans residues 32–56 (NAKEKPQQGEVLAVGPGRRDDEGKR).

This sequence belongs to the GroES chaperonin family. As to quaternary structure, heptamer of 7 subunits arranged in a ring. Interacts with the chaperonin GroEL.

It is found in the cytoplasm. Its function is as follows. Together with the chaperonin GroEL, plays an essential role in assisting protein folding. The GroEL-GroES system forms a nano-cage that allows encapsulation of the non-native substrate proteins and provides a physical environment optimized to promote and accelerate protein folding. GroES binds to the apical surface of the GroEL ring, thereby capping the opening of the GroEL channel. This is Co-chaperonin GroES from Bifidobacterium animalis subsp. lactis (strain AD011).